The following is a 76-amino-acid chain: Esculentin-2-ALb (76 aa).

The first 22 residues, 1 to 22, serve as a signal peptide directing secretion; the sequence is MFTMKKSLLLLFFLGTISLSLC. Positions 23–39 are excised as a propeptide; it reads EEERSADEDDGEKGVKR. The cysteines at positions 70 and 76 are disulfide-linked.

As to expression, expressed by the skin glands.

Its subcellular location is the secreted. In terms of biological role, antimicrobial peptide with activity against Gram-positive and Gram-negative bacteria and against fungi. Has been tested against S.aureus (MIC=1.25 ug/mL), B.pumilus (MIC=2.5 ug/mL), B.cereus (MIC=7.5 ug/mL), E.coli (MIC=12.5 ug/mL), B.dysenteriae (MIC=7.5 ug/mL), A.cacoaceticus (MIC=12.5 ug/mL), P.aeruginosa (MIC=50.0 ug/mL) and C.albicans (MIC=2.5 ug/mL). Also shows a weak hemolytic activity. The protein is Esculentin-2-ALb of Amolops loloensis (Lolokou Sucker Frog).